The sequence spans 202 residues: Imidazoleglycerol-phosphate dehydratase (202 aa).

It belongs to the imidazoleglycerol-phosphate dehydratase family.

Its subcellular location is the cytoplasm. The enzyme catalyses D-erythro-1-(imidazol-4-yl)glycerol 3-phosphate = 3-(imidazol-4-yl)-2-oxopropyl phosphate + H2O. The protein operates within amino-acid biosynthesis; L-histidine biosynthesis; L-histidine from 5-phospho-alpha-D-ribose 1-diphosphate: step 6/9. In Corynebacterium efficiens (strain DSM 44549 / YS-314 / AJ 12310 / JCM 11189 / NBRC 100395), this protein is Imidazoleglycerol-phosphate dehydratase.